We begin with the raw amino-acid sequence, 263 residues long: HTH-type transcriptional repressor NanR (263 aa).

The interval 1–22 (MGLMNAFDSQTEDSSPAIGRNL) is disordered. The HTH gntR-type domain occupies 30-98 (KKLSEMVEEE…NGERARVSRP (69 aa)). A DNA-binding region (H-T-H motif) is located at residues 58–77 (ERELMAFFNVGRPSVREALA).

Belongs to the NanR family.

Functionally, transcriptional repressor that controls expression of the genes required for the catabolism of sialic acids. The protein is HTH-type transcriptional repressor NanR of Shigella boydii serotype 4 (strain Sb227).